Reading from the N-terminus, the 321-residue chain is Methionyl-tRNA formyltransferase (321 aa).

Ser-111–Pro-114 provides a ligand contact to (6S)-5,6,7,8-tetrahydrofolate.

The protein belongs to the Fmt family.

It catalyses the reaction L-methionyl-tRNA(fMet) + (6R)-10-formyltetrahydrofolate = N-formyl-L-methionyl-tRNA(fMet) + (6S)-5,6,7,8-tetrahydrofolate + H(+). Functionally, attaches a formyl group to the free amino group of methionyl-tRNA(fMet). The formyl group appears to play a dual role in the initiator identity of N-formylmethionyl-tRNA by promoting its recognition by IF2 and preventing the misappropriation of this tRNA by the elongation apparatus. In Bifidobacterium animalis subsp. lactis (strain AD011), this protein is Methionyl-tRNA formyltransferase.